A 357-amino-acid chain; its full sequence is UDP-N-acetylglucosamine--N-acetylmuramyl-(pentapeptide) pyrophosphoryl-undecaprenol N-acetylglucosamine transferase (357 aa).

UDP-N-acetyl-alpha-D-glucosamine contacts are provided by residues 12–14 (TGG), N124, R163, S191, I245, 264–269 (ALTVSE), and Q290.

Belongs to the glycosyltransferase 28 family. MurG subfamily.

Its subcellular location is the cell inner membrane. The catalysed reaction is di-trans,octa-cis-undecaprenyl diphospho-N-acetyl-alpha-D-muramoyl-L-alanyl-D-glutamyl-meso-2,6-diaminopimeloyl-D-alanyl-D-alanine + UDP-N-acetyl-alpha-D-glucosamine = di-trans,octa-cis-undecaprenyl diphospho-[N-acetyl-alpha-D-glucosaminyl-(1-&gt;4)]-N-acetyl-alpha-D-muramoyl-L-alanyl-D-glutamyl-meso-2,6-diaminopimeloyl-D-alanyl-D-alanine + UDP + H(+). It participates in cell wall biogenesis; peptidoglycan biosynthesis. In terms of biological role, cell wall formation. Catalyzes the transfer of a GlcNAc subunit on undecaprenyl-pyrophosphoryl-MurNAc-pentapeptide (lipid intermediate I) to form undecaprenyl-pyrophosphoryl-MurNAc-(pentapeptide)GlcNAc (lipid intermediate II). The polypeptide is UDP-N-acetylglucosamine--N-acetylmuramyl-(pentapeptide) pyrophosphoryl-undecaprenol N-acetylglucosamine transferase (Nitrosospira multiformis (strain ATCC 25196 / NCIMB 11849 / C 71)).